Reading from the N-terminus, the 584-residue chain is ATP-dependent lipid A-core flippase (584 aa).

The next 5 helical transmembrane spans lie at L18–L38, V65–F85, I155–L175, I252–A272, and V277–M297. The ABC transmembrane type-1 domain maps to V30 to R312. The ABC transporter domain maps to I344 to L580. Residue G378–S385 participates in ATP binding.

This sequence belongs to the ABC transporter superfamily. Lipid exporter (TC 3.A.1.106) family. In terms of assembly, homodimer.

The protein localises to the cell inner membrane. It carries out the reaction ATP + H2O + lipid A-core oligosaccharideSide 1 = ADP + phosphate + lipid A-core oligosaccharideSide 2.. Functionally, involved in lipopolysaccharide (LPS) biosynthesis. Translocates lipid A-core from the inner to the outer leaflet of the inner membrane. Transmembrane domains (TMD) form a pore in the inner membrane and the ATP-binding domain (NBD) is responsible for energy generation. This is ATP-dependent lipid A-core flippase from Blochmanniella pennsylvanica (strain BPEN).